The chain runs to 630 residues: Probable potassium transport system protein Kup (630 aa).

12 consecutive transmembrane segments (helical) span residues 19–39 (GLIG…LYAV), 59–79 (LLSL…VLLI), 108–128 (WIIG…ATIT), 145–165 (PGLK…LFFV), 173–193 (VGGA…ALGL), 220–240 (LLAF…EALY), 255–275 (WLFF…ALVI), 284–304 (PFFF…ATIA), 345–365 (IYVP…VLGF), 374–394 (AYGI…AFVY), 405–425 (TVLV…SNVL), and 427–447 (VFDG…VMTT).

This sequence belongs to the HAK/KUP transporter (TC 2.A.72) family.

Its subcellular location is the cell inner membrane. The enzyme catalyses K(+)(in) + H(+)(in) = K(+)(out) + H(+)(out). Its function is as follows. Transport of potassium into the cell. Likely operates as a K(+):H(+) symporter. This chain is Probable potassium transport system protein Kup, found in Acidiphilium cryptum (strain JF-5).